The following is an 82-amino-acid chain: Small ribosomal subunit protein bS16 (82 aa).

It belongs to the bacterial ribosomal protein bS16 family.

This is Small ribosomal subunit protein bS16 from Gloeothece citriformis (strain PCC 7424) (Cyanothece sp. (strain PCC 7424)).